We begin with the raw amino-acid sequence, 50 residues long: Disintegrin pyramidin-A (50 aa).

Residues 1–47 form the Disintegrin domain; sequence DCASGPCCRDCKFLKEGTICKRARGDNMDDYCNGKTCDCPRNPHKGE. Cystine bridges form between cysteine 2-cysteine 11, cysteine 7-cysteine 32, cysteine 8-cysteine 37, and cysteine 20-cysteine 39. A Cell attachment site motif is present at residues 24–26; that stretch reads RGD.

Belongs to the venom metalloproteinase (M12B) family. P-II subfamily. P-IIa sub-subfamily. As to quaternary structure, monomer (disintegrin). In terms of tissue distribution, expressed by the venom gland.

Its subcellular location is the secreted. Functionally, inhibits ADP-induced human platelet aggregation. This chain is Disintegrin pyramidin-A, found in Echis pyramidum leakeyi (Leakey's carpet viper).